Consider the following 393-residue polypeptide: Formate-dependent phosphoribosylglycinamide formyltransferase (393 aa).

N(1)-(5-phospho-beta-D-ribosyl)glycinamide contacts are provided by residues 22 to 23 and glutamate 82; that span reads EL. ATP contacts are provided by residues arginine 114, lysine 155, 160 to 165, 195 to 198, and glutamate 203; these read SSGKGQ and EGFI. The ATP-grasp domain occupies 119 to 308; that stretch reads RLAAEELKLP…QFALHARAIL (190 aa). Mg(2+) contacts are provided by glutamate 267 and glutamate 279. N(1)-(5-phospho-beta-D-ribosyl)glycinamide is bound by residues aspartate 286, lysine 356, and 363-364; that span reads RR.

It belongs to the PurK/PurT family. Homodimer.

The catalysed reaction is N(1)-(5-phospho-beta-D-ribosyl)glycinamide + formate + ATP = N(2)-formyl-N(1)-(5-phospho-beta-D-ribosyl)glycinamide + ADP + phosphate + H(+). The protein operates within purine metabolism; IMP biosynthesis via de novo pathway; N(2)-formyl-N(1)-(5-phospho-D-ribosyl)glycinamide from N(1)-(5-phospho-D-ribosyl)glycinamide (formate route): step 1/1. Functionally, involved in the de novo purine biosynthesis. Catalyzes the transfer of formate to 5-phospho-ribosyl-glycinamide (GAR), producing 5-phospho-ribosyl-N-formylglycinamide (FGAR). Formate is provided by PurU via hydrolysis of 10-formyl-tetrahydrofolate. The protein is Formate-dependent phosphoribosylglycinamide formyltransferase of Pseudomonas syringae pv. tomato (strain ATCC BAA-871 / DC3000).